We begin with the raw amino-acid sequence, 357 residues long: MVSIPATSLYGLGRQQPFQDLSKSLLTHLNLFTPQEAQSQAVPGTRTETEPTGSSPSDLQEQRKLADDKIIWAPLDYLCSFPGKDIRGKLISAFNQWLQIPEDKLDVIKRVVGLLHSASLLIDDIQDSSKLRRGFPVAHSIFGIAQTINSANFAYFWAQQELKKLGKPEAMVIFTEEMLRLHRGQGLDLYWRDSLTCPTEEEYLEMVANKTGGLFRLAIKLMQMESHNTEDCVPLVDLLGIIFQIRDDYQNLQSDLYAKNKGFGEDITEGKFSYPIIHSIRSDPSNFQLMNILKQKTEDEDVKRYAVRIIESTGSFDHCRKKLENLTAEAREILKDFGDLGNTDGLKGILDFLELKG.

The disordered stretch occupies residues 36–60; sequence EAQSQAVPGTRTETEPTGSSPSDLQ. Positions 50–59 are enriched in polar residues; the sequence is EPTGSSPSDL. 3 residues coordinate isopentenyl diphosphate: K84, R87, and H116. The Mg(2+) site is built by D123 and D127. Position 132 (R132) interacts with dimethylallyl diphosphate. R133 provides a ligand contact to isopentenyl diphosphate. Positions 210, 211, and 244 each coordinate dimethylallyl diphosphate. D247 contacts Mg(2+). The dimethylallyl diphosphate site is built by N251, K261, and K271.

It belongs to the FPP/GGPP synthase family. Requires Mg(2+) as cofactor.

The enzyme catalyses isopentenyl diphosphate + dimethylallyl diphosphate = (2E)-geranyl diphosphate + diphosphate. It catalyses the reaction isopentenyl diphosphate + (2E)-geranyl diphosphate = (2E,6E)-farnesyl diphosphate + diphosphate. It carries out the reaction isopentenyl diphosphate + (2E,6E)-farnesyl diphosphate = (2E,6E,10E)-geranylgeranyl diphosphate + diphosphate. It participates in secondary metabolite biosynthesis; terpenoid biosynthesis. Functionally, geranylgeranyl pyrophosphate synthase; part of the gene cluster that mediates the biosynthesis of meroterpenoids called sartorypyrones. Within the pathway, spyE provides the spyF cosubstrate geranylgeranyl pyrophosphate (GGPP) for the prenylation of triacetic acid lactone (TAL). The biosynthesis of sartorypyrones begins with the production of triacetic acid lactone (TAL) by the NR-PKS spyA using one molecule of acetyl-CoA and two molecules of malonyl-CoA. The prenyltransferase spyF then conjugates geranylgeranyl pyrophosphate (GGPP) to TAL to form geranylgeranyl-triacetate lactone, for which the pathway-specific geranylgeranyl pyrophosphate synthase (GGPS) spyE is required to provide GGPP. Subsequently, geranylgeranyl-triacetate lactone is epoxidized at the terminal olein by the FAD-dependent monooxygenase spyC, followed by cyclization of the terpenoid component catalyzed by the terpene cyclase spyD to produce both the bicyclic sartorypyrone F and the monocyclic sartorypyrone D. Finally, the last step of the biosynthesis involves the acetylation of the meroterpenoids sartorypyrones D and F by the acetyltransferase SpyB to produce sartorypyrones A and G, respectively. The sequence is that of Geranylgeranyl pyrophosphate synthase spyE from Aspergillus fumigatus (strain ATCC MYA-4609 / CBS 101355 / FGSC A1100 / Af293) (Neosartorya fumigata).